Reading from the N-terminus, the 97-residue chain is Small ribosomal subunit protein bS20 (97 aa).

It belongs to the bacterial ribosomal protein bS20 family.

In terms of biological role, binds directly to 16S ribosomal RNA. The chain is Small ribosomal subunit protein bS20 from Prochlorococcus marinus (strain MIT 9215).